A 1648-amino-acid chain; its full sequence is eIF-2-alpha kinase GCN2 (1648 aa).

Positions Met1 to Glu26 are disordered. Residues His25–His137 enclose the RWD domain. Residues His146 to Ser205 adopt a coiled-coil conformation. Residue Ser230 is modified to Phosphoserine. Protein kinase domains are found at residues Val286–Ile538 and Phe589–Leu1000. Residues Leu595 to Val603 and Lys618 each bind ATP. The disordered stretch occupies residues Pro661–Ile784. Thr666 is modified (phosphothreonine). Polar residues-rich tracts occupy residues Pro673 to Ser686 and Leu704 to Phe722. 2 stretches are compositionally biased toward acidic residues: residues Ser730 to Arg739 and Ser753 to Asp763. Residues Cys775 to Ile784 show a composition bias toward basic and acidic residues. Asp846 acts as the Proton acceptor in catalysis. A Phosphothreonine modification is found at Thr869. Thr898 and Thr903 each carry phosphothreonine; by autocatalysis. The interval Ile1021–Lys1492 is histidyl-tRNA synthetase-like. Lys1258 is modified (N6-acetyllysine).

It belongs to the protein kinase superfamily. Ser/Thr protein kinase family. GCN2 subfamily. As to quaternary structure, homodimer; homodimerization is important for kinase activation by uncharged tRNAs. Interacts with GCN1; this interaction stimulates EIF2AK4/GCN2 kinase activity and is impaired by IMPACT upon a variety of stress conditions, such as amino acid depletion, UV-C irradiation, proteasome inhibitor treatment and glucose deprivation. Interacts with DNAJC3; this interaction inhibits EIF2AK4/GCN2 kinase activity during endoplasmic reticulum (ER), hypothermic and amino acid-starving stress conditions. Interacts with MAP3K20; activates EIF2AK4/GCN2 kinase activity in response to moderate ribotoxic stress. Post-translationally, autophosphorylated; autophosphorylation on Thr-898 is increased upon amino acid starvation and in UV irradiation cells and inhibited in presence of IMPACT. Expressed in liver. Expressed predominantly in the hippocampal CA1 region and the dentate gyrus, and to a lesser degree in CA3 (at protein level). Expressed in liver, lung, brain, kidney, skeletal muscle and testis. Expressed weakly in heart and spleen. Expressed in the hippocampal CA1 and CA3 regions, the dentate gyrus and cerebellum. Isoform 1 is widely expressed. Isoform 1 is expressed in brain, liver, skeletal muscle and testis. Isoform 3 is expressed in lung, brain, testis, prostate and choroid plexus. Isoform 4 is expressed in muscle, lung, kidney, brain, testis and prostate.

Its subcellular location is the cytoplasm. It carries out the reaction L-seryl-[protein] + ATP = O-phospho-L-seryl-[protein] + ADP + H(+). The enzyme catalyses L-threonyl-[protein] + ATP = O-phospho-L-threonyl-[protein] + ADP + H(+). (Microbial infection) Kinase activity is enhanced by alphavirus genomic RNA sequences. Kinase activity is stimulated upon binding to uncharged tRNAs. Activated by serum starvation (in vitro). Functionally, metabolic-stress sensing protein kinase that phosphorylates the alpha subunit of eukaryotic translation initiation factor 2 (EIF2S1/eIF-2-alpha) in response to low amino acid availability. Plays a role as an activator of the integrated stress response (ISR) required for adaptation to amino acid starvation. EIF2S1/eIF-2-alpha phosphorylation in response to stress converts EIF2S1/eIF-2-alpha into a global protein synthesis inhibitor, leading to a global attenuation of cap-dependent translation, and thus to a reduced overall utilization of amino acids, while concomitantly initiating the preferential translation of ISR-specific mRNAs, such as the transcriptional activator ATF4, and hence allowing ATF4-mediated reprogramming of amino acid biosynthetic gene expression to alleviate nutrient depletion. Required for the translational induction of protein kinase PRKCH following amino acid starvation. Binds uncharged tRNAs. Involved in cell cycle arrest by promoting cyclin D1 mRNA translation repression after the unfolded protein response pathway (UPR) activation or cell cycle inhibitor CDKN1A/p21 mRNA translation activation in response to amino acid deprivation. Plays a role in the consolidation of synaptic plasticity, learning as well as formation of long-term memory. Plays a role in neurite outgrowth inhibition. Plays a role in feeding behavior to maintain amino acid homeostasis; contributes to the innate aversion toward diets of imbalanced amino acid composition. Plays a proapoptotic role in response to glucose deprivation. Promotes global cellular protein synthesis repression in response to UV irradiation independently of the stress-activated protein kinase/c-Jun N-terminal kinase (SAPK/JNK) and p38 MAPK signaling pathways. In terms of biological role, (Microbial infection) Plays a role in the antiviral response against alphavirus infection; impairs early viral mRNA translation of the incoming genomic virus RNA, thus preventing alphavirus replication. (Microbial infection) Plays a role in modulating the adaptive immune response to Yellow fever virus infection; promotes dendritic cells to initiate autophagy and antigene presentation to both CD4(+) and CD8(+) T-cells under amino acid starvation. The sequence is that of eIF-2-alpha kinase GCN2 from Mus musculus (Mouse).